We begin with the raw amino-acid sequence, 1203 residues long: Metabotropic glutamate receptor 5 (1203 aa).

Residues Met-1–Ala-20 form the signal peptide. Residues Gln-21–Pro-579 are Extracellular-facing. A disulfide bridge links Cys-57 with Cys-99. Position 64 (Tyr-64) interacts with L-glutamate. N-linked (GlcNAc...) asparagine glycosylation is present at Asn-88. L-glutamate is bound by residues Ser-151 and Ser-172–Thr-174. N-linked (GlcNAc...) asparagine glycosylation occurs at Asn-209. Tyr-222 contacts L-glutamate. 8 cysteine pairs are disulfide-bonded: Cys-240-Cys-529, Cys-275-Cys-277, Cys-364-Cys-380, Cys-418-Cys-425, Cys-510-Cys-530, Cys-514-Cys-533, Cys-536-Cys-548, and Cys-551-Cys-564. Asp-304 contributes to the L-glutamate binding site. Residues Asn-377 and Asn-381 are each glycosylated (N-linked (GlcNAc...) asparagine). Position 395 (Lys-395) interacts with L-glutamate. Asn-444 is a glycosylation site (N-linked (GlcNAc...) asparagine). Residues Ile-580–Ile-602 form a helical membrane-spanning segment. At Tyr-603–Ser-612 the chain is on the cytoplasmic side. Residues Ser-613 to Ile-635 form a helical membrane-spanning segment. Topologically, residues Ala-636 to Cys-643 are extracellular. Cys-643 and Cys-732 form a disulfide bridge. Residues Tyr-644 to Asn-666 form a helical membrane-spanning segment. Topologically, residues Arg-667–Gln-692 are cytoplasmic. A helical membrane pass occupies residues Leu-693–Met-713. At Glu-714–Asn-736 the chain is on the extracellular side. Asn-733 carries an N-linked (GlcNAc...) asparagine glycan. The chain crosses the membrane as a helical span at residues Leu-737–Phe-758. At Lys-759 to Lys-771 the chain is on the cytoplasmic side. The chain crosses the membrane as a helical span at residues Tyr-772 to Ser-794. Residues Asn-795–Lys-797 lie on the Extracellular side of the membrane. Residues Ile-798 to Pro-819 traverse the membrane as a helical segment. Residues Lys-820 to Leu-1203 lie on the Cytoplasmic side of the membrane. The residue at position 860 (Ser-860) is a Phosphoserine. Arg-868 is subject to Omega-N-methylarginine. 3 disordered regions span residues Phe-892–Pro-970, Glu-1003–Met-1054, and Gly-1122–Ile-1182. A compositionally biased stretch (polar residues) spans Thr-905–Glu-920. Arg-924 is subject to Omega-N-methylarginine. Over residues Pro-1007–Pro-1017 the composition is skewed to low complexity. Phosphoserine is present on residues Ser-1014 and Ser-1016. Polar residues-rich tracts occupy residues His-1039–Met-1054 and Asp-1165–Ser-1176.

It belongs to the G-protein coupled receptor 3 family. As to quaternary structure, interacts with RYR1, RYR2, ITPR1, SHANK1 and SHANK3. The PPXXF motif binds HOMER1, HOMER2 and HOMER3. Interacts with SIAH1 and TAMALIN. Interacts with NCDN. Interacts with NECAB2. Interacts with CAMK2A. Widely distributed in neuronal cells of the central nervous system.

Its subcellular location is the cell membrane. Functionally, G-protein coupled receptor for glutamate. Ligand binding causes a conformation change that triggers signaling via guanine nucleotide-binding proteins (G proteins) and modulates the activity of down-stream effectors. Signaling activates a phosphatidylinositol-calcium second messenger system and generates a calcium-activated chloride current. Plays an important role in the regulation of synaptic plasticity and the modulation of the neural network activity. The chain is Metabotropic glutamate receptor 5 (Grm5) from Rattus norvegicus (Rat).